The chain runs to 183 residues: ATP synthase subunit b, chloroplastic (183 aa).

The helical transmembrane segment at Asp28–Leu48 threads the bilayer.

This sequence belongs to the ATPase B chain family. In terms of assembly, F-type ATPases have 2 components, F(1) - the catalytic core - and F(0) - the membrane proton channel. F(1) has five subunits: alpha(3), beta(3), gamma(1), delta(1), epsilon(1). F(0) has four main subunits: a(1), b(1), b'(1) and c(10-14). The alpha and beta chains form an alternating ring which encloses part of the gamma chain. F(1) is attached to F(0) by a central stalk formed by the gamma and epsilon chains, while a peripheral stalk is formed by the delta, b and b' chains.

The protein localises to the plastid. It is found in the chloroplast thylakoid membrane. Functionally, f(1)F(0) ATP synthase produces ATP from ADP in the presence of a proton or sodium gradient. F-type ATPases consist of two structural domains, F(1) containing the extramembraneous catalytic core and F(0) containing the membrane proton channel, linked together by a central stalk and a peripheral stalk. During catalysis, ATP synthesis in the catalytic domain of F(1) is coupled via a rotary mechanism of the central stalk subunits to proton translocation. In terms of biological role, component of the F(0) channel, it forms part of the peripheral stalk, linking F(1) to F(0). This chain is ATP synthase subunit b, chloroplastic, found in Pyropia yezoensis (Susabi-nori).